The following is a 272-amino-acid chain: Orotidine 5'-phosphate decarboxylase (272 aa).

Lys-93 acts as the Proton donor in catalysis.

It belongs to the OMP decarboxylase family. Type 2 subfamily.

The catalysed reaction is orotidine 5'-phosphate + H(+) = UMP + CO2. Its pathway is pyrimidine metabolism; UMP biosynthesis via de novo pathway; UMP from orotate: step 2/2. This Roseiflexus sp. (strain RS-1) protein is Orotidine 5'-phosphate decarboxylase.